The primary structure comprises 76 residues: FMRFamide-related neuropeptides (76 aa).

An N-terminal signal peptide occupies residues 1–27; it reads MCVQTRMLVAVAVVLVVLAVLSDPVSA. Phenylalanine 39 carries the phenylalanine amide modification.

Belongs to the FARP (FMRFamide related peptide) family. As to expression, olfactory lobe and accessory lobe, olfactory globular tract, olfactory lobe cells (at protein level). Widely distributed throughout nervous system.

It is found in the secreted. Functionally, GYRKPPFNGSIF-amide may be involved in olfaction and contraction of hindgut. The chain is FMRFamide-related neuropeptides from Procambarus clarkii (Red swamp crayfish).